A 533-amino-acid polypeptide reads, in one-letter code: Protein mono-ADP-ribosyltransferase PARP3 (533 aa).

The disordered stretch occupies residues 1–30 (MAPKPKPWVQTEGPEKKKGRQAGREEDPFR). Lysine 6 bears the N6-(ADP-ribosyl)lysine mark. Residues glutamate 12, glutamate 15, glutamate 26, and glutamate 34 each carry the ADP-ribosyl glutamic acid modification. The short motif at 14-20 (PEKKKGR) is the Nuclear localization signal element. Position 37 is an N6-(ADP-ribosyl)lysine (lysine 37). The region spanning 59 to 150 (GTQVYEDYNC…DHFVSHPGKY (92 aa)) is the WGR domain. Position 141 is an ADP-ribosyl aspartic acid (aspartate 141). Glutamate 163 carries the ADP-ribosyl glutamic acid modification. Residues 182 to 300 (PCSLDPATQK…DIELAQALQA (119 aa)) enclose the PARP alpha-helical domain. Aspartate 210 carries the post-translational modification ADP-ribosyl aspartic acid. ADP-ribosyl glutamic acid occurs at positions 231, 309, 310, 344, and 449. Residues 313 to 533 (HPLDRDYQLL…RLRYLLEVHL (221 aa)) enclose the PARP catalytic domain. The tract at residues 454 to 482 (TDNPSLKSPPPGFDSVIARGHTEPDPTQD) is disordered.

This sequence belongs to the ARTD/PARP family. In terms of assembly, interacts with PARP1; leading to activate PARP1 in absence of DNA. Interacts with PRKDC. Interacts with XRCC5/Ku80; the interaction is dependent on nucleic acids. Interacts with XRCC6/Ku70; the interaction is dependent on nucleic acids. Interacts with EZH2, HDAC1, HDAC2, SUZ12, YY1, LRIG3 and LIG4. Auto-mono-ADP-ribosylated. As to expression, widely expressed; the highest levels are in the kidney, skeletal muscle, liver, heart and spleen; also detected in pancreas, lung, placenta, brain, leukocytes, colon, small intestine, ovary, testis, prostate and thymus.

Its subcellular location is the nucleus. The protein resides in the chromosome. It localises to the cytoplasm. The protein localises to the cytoskeleton. It is found in the microtubule organizing center. Its subcellular location is the centrosome. The protein resides in the centriole. It carries out the reaction L-aspartyl-[protein] + NAD(+) = 4-O-(ADP-D-ribosyl)-L-aspartyl-[protein] + nicotinamide. It catalyses the reaction L-glutamyl-[protein] + NAD(+) = 5-O-(ADP-D-ribosyl)-L-glutamyl-[protein] + nicotinamide. The catalysed reaction is L-lysyl-[protein] + NAD(+) = N(6)-(ADP-D-ribosyl)-L-lysyl-[protein] + nicotinamide + H(+). Its activity is regulated as follows. Mono-ADP-ribosyltransferase activity of PARP3 is selectively inhibited by ME0328 compound; ME0328 does not inhibit other ARTD/PARP enzymes, such as PARP1. Mono-ADP-ribosyltransferase is strongly inhibited by KU0058948 compound. In terms of biological role, mono-ADP-ribosyltransferase that mediates mono-ADP-ribosylation of target proteins and plays a key role in the response to DNA damage. Mediates mono-ADP-ribosylation of glutamate, aspartate or lysine residues on target proteins. In contrast to PARP1 and PARP2, it is not able to mediate poly-ADP-ribosylation. Involved in DNA repair by mediating mono-ADP-ribosylation of a limited number of acceptor proteins involved in chromatin architecture and in DNA metabolism, such as histone H2B, XRCC5 and XRCC6. ADP-ribosylation follows DNA damage and appears as an obligatory step in a detection/signaling pathway leading to the reparation of DNA strand breaks. Involved in single-strand break repair by catalyzing mono-ADP-ribosylation of histone H2B on 'Glu-2' (H2BE2ADPr) of nucleosomes containing nicked DNA. Cooperates with the XRCC5-XRCC6 (Ku80-Ku70) heterodimer to limit end-resection thereby promoting accurate NHEJ. Suppresses G-quadruplex (G4) structures in response to DNA damage. Associates with a number of DNA repair factors and is involved in the response to exogenous and endogenous DNA strand breaks. Together with APLF, promotes the retention of the LIG4-XRCC4 complex on chromatin and accelerate DNA ligation during non-homologous end-joining (NHEJ). May link the DNA damage surveillance network to the mitotic fidelity checkpoint. Acts as a negative regulator of immunoglobulin class switch recombination, probably by controlling the level of AICDA /AID on the chromatin. In addition to proteins, also able to ADP-ribosylate DNA: mediates DNA mono-ADP-ribosylation of DNA strand break termini via covalent addition of a single ADP-ribose moiety to a 5'- or 3'-terminal phosphate residues in DNA containing multiple strand breaks. In Homo sapiens (Human), this protein is Protein mono-ADP-ribosyltransferase PARP3.